The following is a 293-amino-acid chain: Acetyl-coenzyme A carboxylase carboxyl transferase subunit beta (293 aa).

Residues 29–293 (LWVKCSECSQ…GVKELAEANI (265 aa)) enclose the CoA carboxyltransferase N-terminal domain. 4 residues coordinate Zn(2+): Cys33, Cys36, Cys52, and Cys55. A C4-type zinc finger spans residues 33-55 (CSECSQVAYRKDLISNFNVCSNC).

It belongs to the AccD/PCCB family. Acetyl-CoA carboxylase is a heterohexamer composed of biotin carboxyl carrier protein (AccB), biotin carboxylase (AccC) and two subunits each of ACCase subunit alpha (AccA) and ACCase subunit beta (AccD). The cofactor is Zn(2+).

Its subcellular location is the cytoplasm. It carries out the reaction N(6)-carboxybiotinyl-L-lysyl-[protein] + acetyl-CoA = N(6)-biotinyl-L-lysyl-[protein] + malonyl-CoA. The protein operates within lipid metabolism; malonyl-CoA biosynthesis; malonyl-CoA from acetyl-CoA: step 1/1. Component of the acetyl coenzyme A carboxylase (ACC) complex. Biotin carboxylase (BC) catalyzes the carboxylation of biotin on its carrier protein (BCCP) and then the CO(2) group is transferred by the transcarboxylase to acetyl-CoA to form malonyl-CoA. This Prochlorococcus marinus (strain MIT 9312) protein is Acetyl-coenzyme A carboxylase carboxyl transferase subunit beta.